Reading from the N-terminus, the 150-residue chain is FAD synthase (150 aa).

ATP-binding positions include 16–17, 21–24, and Asp102; these read VF and HVGH.

It belongs to the archaeal FAD synthase family. In terms of assembly, homodimer. It depends on a divalent metal cation as a cofactor.

The enzyme catalyses FMN + ATP + H(+) = FAD + diphosphate. The protein operates within cofactor biosynthesis; FAD biosynthesis; FAD from FMN: step 1/1. In terms of biological role, catalyzes the transfer of the AMP portion of ATP to flavin mononucleotide (FMN) to produce flavin adenine dinucleotide (FAD) coenzyme. The protein is FAD synthase of Thermococcus onnurineus (strain NA1).